A 289-amino-acid chain; its full sequence is RNA exonuclease 4 (289 aa).

Over residues 1-24 the composition is skewed to polar residues; that stretch reads MALSSNWQALLASESNPTSNGKNK. The tract at residues 1–34 is disordered; the sequence is MALSSNWQALLASESNPTSNGKNKQSNRKIRNVK. Basic residues predominate over residues 25 to 34; the sequence is QSNRKIRNVK. The 153-residue stretch at 121–273 folds into the Exonuclease domain; it reads YIAMDCEFVG…EDARATMLLY (153 aa).

It belongs to the REXO4 family.

Its subcellular location is the nucleus. Functionally, exoribonuclease involved in ribosome biosynthesis. Involved in the processing of ITS1, the internal transcribed spacer localized between the 18S and 5.8S rRNAs. The chain is RNA exonuclease 4 (REX4) from Saccharomyces cerevisiae (strain ATCC 204508 / S288c) (Baker's yeast).